Consider the following 148-residue polypeptide: uncharacterized protein (148 aa).

A run of 3 helical transmembrane segments spans residues 20 to 42 (YYSK…IANY), 52 to 74 (YFLM…VRCY), and 118 to 135 (IIRY…CTYI).

Its subcellular location is the cell membrane. This is an uncharacterized protein from Rickettsia prowazekii (strain Madrid E).